A 215-amino-acid chain; its full sequence is MATAWESEYFDKVTPGERERAVPPMVPQQTPPPVYIQPQVSRNGIVASIVLRLLTLIFAVVALAVLASNTGSFQVSTGSATSVKTIKFTILSAFTYLFAVCGVVAVYSLLLIIVEMIDLAVRGFTTHTLVAIFVFVLDQTMAYVLISAASASANGVKVSRDESNITGYKFDISCSNLGIDDYCTKASASVAIAFIAFLFMAITAGVSARRLFKLP.

The Cytoplasmic portion of the chain corresponds to 1–44 (MATAWESEYFDKVTPGERERAVPPMVPQQTPPPVYIQPQVSRNG). A helical membrane pass occupies residues 45–65 (IVASIVLRLLTLIFAVVALAV). Topologically, residues 66-93 (LASNTGSFQVSTGSATSVKTIKFTILSA) are extracellular. The helical transmembrane segment at 94-114 (FTYLFAVCGVVAVYSLLLIIV) threads the bilayer. Over 115–128 (EMIDLAVRGFTTHT) the chain is Cytoplasmic. Residues 129–149 (LVAIFVFVLDQTMAYVLISAA) traverse the membrane as a helical segment. Topologically, residues 150-185 (SASANGVKVSRDESNITGYKFDISCSNLGIDDYCTK) are extracellular. A glycan (N-linked (GlcNAc...) asparagine) is linked at asparagine 164. Residues 186–206 (ASASVAIAFIAFLFMAITAGV) traverse the membrane as a helical segment. Topologically, residues 207-215 (SARRLFKLP) are cytoplasmic.

It belongs to the Casparian strip membrane proteins (CASP) family. In terms of assembly, homodimer and heterodimers.

The protein resides in the cell membrane. This Physcomitrium patens (Spreading-leaved earth moss) protein is CASP-like protein UU3.